The chain runs to 239 residues: Pyridoxine 5'-phosphate synthase (239 aa).

Residue asparagine 7 participates in 3-amino-2-oxopropyl phosphate binding. A 1-deoxy-D-xylulose 5-phosphate-binding site is contributed by 9 to 10 (DH). Position 18 (arginine 18) interacts with 3-amino-2-oxopropyl phosphate. The Proton acceptor role is filled by histidine 43. Residues arginine 45 and histidine 50 each contribute to the 1-deoxy-D-xylulose 5-phosphate site. The active-site Proton acceptor is glutamate 70. 1-deoxy-D-xylulose 5-phosphate is bound at residue threonine 100. Residue histidine 191 is the Proton donor of the active site. Residues glycine 192 and 213 to 214 (GH) contribute to the 3-amino-2-oxopropyl phosphate site.

The protein belongs to the PNP synthase family. As to quaternary structure, homooctamer; tetramer of dimers.

Its subcellular location is the cytoplasm. The catalysed reaction is 3-amino-2-oxopropyl phosphate + 1-deoxy-D-xylulose 5-phosphate = pyridoxine 5'-phosphate + phosphate + 2 H2O + H(+). It functions in the pathway cofactor biosynthesis; pyridoxine 5'-phosphate biosynthesis; pyridoxine 5'-phosphate from D-erythrose 4-phosphate: step 5/5. In terms of biological role, catalyzes the complicated ring closure reaction between the two acyclic compounds 1-deoxy-D-xylulose-5-phosphate (DXP) and 3-amino-2-oxopropyl phosphate (1-amino-acetone-3-phosphate or AAP) to form pyridoxine 5'-phosphate (PNP) and inorganic phosphate. This chain is Pyridoxine 5'-phosphate synthase, found in Pelobacter propionicus (strain DSM 2379 / NBRC 103807 / OttBd1).